The sequence spans 190 residues: CASP-like protein 1E2 (190 aa).

The disordered stretch occupies residues 1 to 21 (MEHEGKNNMNGMEMEKGKREL). The Cytoplasmic segment spans residues 1–28 (MEHEGKNNMNGMEMEKGKRELGSRKGVE). A helical membrane pass occupies residues 29-49 (LTMRVLALILTMAAATVLGVA). The Extracellular portion of the chain corresponds to 50–83 (KQTKVVSIKLIPTLPPLDITTTAKASYLSAFVYN). A helical transmembrane segment spans residues 84 to 104 (ISVNAIACGYTAISIAILMIS). At 105–111 (RGRRSKK) the chain is on the cytoplasmic side. The chain crosses the membrane as a helical span at residues 112-132 (LLMVVLLGDLVMVALLFSGTG). The Extracellular portion of the chain corresponds to 133-163 (AASAIGLMGLHGNKHVMWKKVCGVFGKFCHR). A helical membrane pass occupies residues 164 to 184 (AAPSLPLTLLAAVVFMFLVVL). Over 185 to 190 (DAIKLP) the chain is Cytoplasmic.

This sequence belongs to the Casparian strip membrane proteins (CASP) family. As to quaternary structure, homodimer and heterodimers.

It localises to the cell membrane. This chain is CASP-like protein 1E2, found in Arabidopsis thaliana (Mouse-ear cress).